The primary structure comprises 455 residues: Gamma-glutamyl phosphate reductase (455 aa).

The protein belongs to the gamma-glutamyl phosphate reductase family.

The protein localises to the cytoplasm. The enzyme catalyses L-glutamate 5-semialdehyde + phosphate + NADP(+) = L-glutamyl 5-phosphate + NADPH + H(+). The protein operates within amino-acid biosynthesis; L-proline biosynthesis; L-glutamate 5-semialdehyde from L-glutamate: step 2/2. In terms of biological role, catalyzes the NADPH-dependent reduction of L-glutamate 5-phosphate into L-glutamate 5-semialdehyde and phosphate. The product spontaneously undergoes cyclization to form 1-pyrroline-5-carboxylate. This is Gamma-glutamyl phosphate reductase from Synechococcus sp. (strain JA-2-3B'a(2-13)) (Cyanobacteria bacterium Yellowstone B-Prime).